The sequence spans 510 residues: ATP synthase subunit alpha (510 aa).

Residue 170–177 (GDRQTGKT) coordinates ATP.

The protein belongs to the ATPase alpha/beta chains family. As to quaternary structure, F-type ATPases have 2 components, CF(1) - the catalytic core - and CF(0) - the membrane proton channel. CF(1) has five subunits: alpha(3), beta(3), gamma(1), delta(1), epsilon(1). CF(0) has three main subunits: a(1), b(2) and c(9-12). The alpha and beta chains form an alternating ring which encloses part of the gamma chain. CF(1) is attached to CF(0) by a central stalk formed by the gamma and epsilon chains, while a peripheral stalk is formed by the delta and b chains.

The protein localises to the cell inner membrane. The catalysed reaction is ATP + H2O + 4 H(+)(in) = ADP + phosphate + 5 H(+)(out). Produces ATP from ADP in the presence of a proton gradient across the membrane. The alpha chain is a regulatory subunit. This is ATP synthase subunit alpha from Dictyoglomus thermophilum (strain ATCC 35947 / DSM 3960 / H-6-12).